The primary structure comprises 304 residues: Ribonuclease Z (304 aa).

Zn(2+) contacts are provided by histidine 63, histidine 65, aspartate 67, histidine 68, histidine 141, aspartate 208, and histidine 266. Aspartate 67 functions as the Proton acceptor in the catalytic mechanism.

Belongs to the RNase Z family. As to quaternary structure, homodimer. It depends on Zn(2+) as a cofactor.

It carries out the reaction Endonucleolytic cleavage of RNA, removing extra 3' nucleotides from tRNA precursor, generating 3' termini of tRNAs. A 3'-hydroxy group is left at the tRNA terminus and a 5'-phosphoryl group is left at the trailer molecule.. In terms of biological role, zinc phosphodiesterase, which displays some tRNA 3'-processing endonuclease activity. Probably involved in tRNA maturation, by removing a 3'-trailer from precursor tRNA. This chain is Ribonuclease Z, found in Chlamydia muridarum (strain MoPn / Nigg).